The chain runs to 347 residues: 4-hydroxy-2-oxovalerate aldolase 2 (347 aa).

Positions 7–259 (VRITDTSLRD…KTGIDFFDIA (253 aa)) constitute a Pyruvate carboxyltransferase domain. 15 to 16 (RD) contacts substrate. D16 provides a ligand contact to Mn(2+). H19 serves as the catalytic Proton acceptor. Residues S169 and H198 each coordinate substrate. Mn(2+)-binding residues include H198 and H200. A substrate-binding site is contributed by Y289.

The protein belongs to the 4-hydroxy-2-oxovalerate aldolase family.

The catalysed reaction is (S)-4-hydroxy-2-oxopentanoate = acetaldehyde + pyruvate. In Mycobacterium ulcerans (strain Agy99), this protein is 4-hydroxy-2-oxovalerate aldolase 2.